We begin with the raw amino-acid sequence, 347 residues long: Dihydroorotase (347 aa).

Residues histidine 13 and histidine 15 each contribute to the Zn(2+) site. Substrate is bound by residues 15–17 (HLR) and asparagine 41. Zn(2+) is bound by residues lysine 99, histidine 136, and histidine 174. Lysine 99 carries the N6-carboxylysine modification. Histidine 136 serves as a coordination point for substrate. Leucine 219 lines the substrate pocket. Residue aspartate 247 participates in Zn(2+) binding. Residue aspartate 247 is part of the active site. Residues histidine 251 and alanine 263 each coordinate substrate.

Belongs to the metallo-dependent hydrolases superfamily. DHOase family. Class II DHOase subfamily. In terms of assembly, homodimer. Zn(2+) serves as cofactor.

It catalyses the reaction (S)-dihydroorotate + H2O = N-carbamoyl-L-aspartate + H(+). The protein operates within pyrimidine metabolism; UMP biosynthesis via de novo pathway; (S)-dihydroorotate from bicarbonate: step 3/3. Catalyzes the reversible cyclization of carbamoyl aspartate to dihydroorotate. The polypeptide is Dihydroorotase (Rhizobium meliloti (strain 1021) (Ensifer meliloti)).